The chain runs to 153 residues: Ribonuclease H (153 aa).

The RNase H type-1 domain maps to 1–142 (MTPEVVIYTD…ADALARKGLS (142 aa)). The Mg(2+) site is built by aspartate 10, glutamate 48, aspartate 70, and aspartate 134.

The protein belongs to the RNase H family. As to quaternary structure, monomer. Mg(2+) serves as cofactor.

The protein localises to the cytoplasm. It catalyses the reaction Endonucleolytic cleavage to 5'-phosphomonoester.. In terms of biological role, endonuclease that specifically degrades the RNA of RNA-DNA hybrids. This Phenylobacterium zucineum (strain HLK1) protein is Ribonuclease H.